Reading from the N-terminus, the 296-residue chain is MAWLGSLDLHYRPDPDAPAAALPRTIGRGVHSGPLRVLQSLYPEGPGICHHVLVHPPGGIVGGDELALTAQVDTGAHALLTTPGATRFYRSGGDAALQTLTARVADGARLEWLPLETLVHDGARARNALRFELAPGAEMLGWDLLALGLPAAGERYASGCFEQSIEVRSAAHPLPWLERGVLDFDDPRHAPVTQRLLASPLGWAGHTVLATLWFASGTALASARRDALIDAARAPDSAAQPGAEPLGVTAPHDHVVVLRMLGARVEPLMQRLRAVRGRWRRLAWDCAGAEPRVWRT.

This sequence belongs to the UreD family. As to quaternary structure, ureD, UreF and UreG form a complex that acts as a GTP-hydrolysis-dependent molecular chaperone, activating the urease apoprotein by helping to assemble the nickel containing metallocenter of UreC. The UreE protein probably delivers the nickel.

It is found in the cytoplasm. Required for maturation of urease via the functional incorporation of the urease nickel metallocenter. The polypeptide is Urease accessory protein UreD (Methylibium petroleiphilum (strain ATCC BAA-1232 / LMG 22953 / PM1)).